The primary structure comprises 215 residues: Ribonuclease HII (215 aa).

One can recognise an RNase H type-2 domain in the interval 24-215 (GVVFGVDEVG…PIRQFYENVD (192 aa)). A divalent metal cation contacts are provided by Asp30, Glu31, and Asp125.

It belongs to the RNase HII family. The cofactor is Mn(2+). Mg(2+) is required as a cofactor.

It is found in the cytoplasm. The enzyme catalyses Endonucleolytic cleavage to 5'-phosphomonoester.. Endonuclease that specifically degrades the RNA of RNA-DNA hybrids. This chain is Ribonuclease HII, found in Zymomonas mobilis subsp. mobilis (strain ATCC 31821 / ZM4 / CP4).